We begin with the raw amino-acid sequence, 127 residues long: Thioredoxin domain-containing protein 8 (127 aa).

Positions 2–127 (VKRIKNMSEL…QLEKKIQELM (126 aa)) constitute a Thioredoxin domain. Cys-32 and Cys-35 are disulfide-bonded.

Belongs to the thioredoxin family. As to expression, testis-specific. Only expressed during spermiogenesis, prominently in the Golgi apparatus of pachytene spermatocytes and round and elongated spermatids, with a transient localization in the developing acrosome of round spermatids (at protein level).

It localises to the cytoplasm. The protein resides in the golgi apparatus. In terms of biological role, may be required for post-translational modifications of proteins required for acrosomal biogenesis. May act by reducing disulfide bonds within the sperm. This chain is Thioredoxin domain-containing protein 8 (Txndc8), found in Mus musculus (Mouse).